The primary structure comprises 42 residues: uncharacterized protein (42 aa).

This is an uncharacterized protein from Pasteurella multocida (strain Pm70).